We begin with the raw amino-acid sequence, 237 residues long: Probable transcriptional regulatory protein PSHAa1370 (237 aa).

It belongs to the TACO1 family.

Its subcellular location is the cytoplasm. This is Probable transcriptional regulatory protein PSHAa1370 from Pseudoalteromonas translucida (strain TAC 125).